The chain runs to 132 residues: Small ribosomal subunit protein uS13 (132 aa).

Positions 101 to 125 are enriched in basic residues; that stretch reads RGLPVRGQRTKTNARTRKGPRKTVA. The segment at 101–132 is disordered; sequence RGLPVRGQRTKTNARTRKGPRKTVANKKIETR.

The protein belongs to the universal ribosomal protein uS13 family. As to quaternary structure, part of the 30S ribosomal subunit. Forms a loose heterodimer with protein S19. Forms two bridges to the 50S subunit in the 70S ribosome.

Functionally, located at the top of the head of the 30S subunit, it contacts several helices of the 16S rRNA. In the 70S ribosome it contacts the 23S rRNA (bridge B1a) and protein L5 of the 50S subunit (bridge B1b), connecting the 2 subunits; these bridges are implicated in subunit movement. Contacts the tRNAs in the A and P-sites. This Ureaplasma parvum serovar 3 (strain ATCC 27815 / 27 / NCTC 11736) protein is Small ribosomal subunit protein uS13.